The primary structure comprises 289 residues: Urease accessory protein UreD (289 aa).

It belongs to the UreD family. As to quaternary structure, ureD, UreF and UreG form a complex that acts as a GTP-hydrolysis-dependent molecular chaperone, activating the urease apoprotein by helping to assemble the nickel containing metallocenter of UreC. The UreE protein probably delivers the nickel.

It is found in the cytoplasm. Its function is as follows. Required for maturation of urease via the functional incorporation of the urease nickel metallocenter. In Cupriavidus pinatubonensis (strain JMP 134 / LMG 1197) (Cupriavidus necator (strain JMP 134)), this protein is Urease accessory protein UreD.